The sequence spans 597 residues: Arginine--tRNA ligase (597 aa).

The 'HIGH' region motif lies at 125 to 135; that stretch reads PNTNKPLHLGH.

Belongs to the class-I aminoacyl-tRNA synthetase family. In terms of assembly, monomer.

It is found in the cytoplasm. It catalyses the reaction tRNA(Arg) + L-arginine + ATP = L-arginyl-tRNA(Arg) + AMP + diphosphate. In Bacteroides fragilis (strain ATCC 25285 / DSM 2151 / CCUG 4856 / JCM 11019 / LMG 10263 / NCTC 9343 / Onslow / VPI 2553 / EN-2), this protein is Arginine--tRNA ligase.